The following is a 438-amino-acid chain: Gamma-glutamyl phosphate reductase (438 aa).

The protein belongs to the gamma-glutamyl phosphate reductase family.

The protein resides in the cytoplasm. The catalysed reaction is L-glutamate 5-semialdehyde + phosphate + NADP(+) = L-glutamyl 5-phosphate + NADPH + H(+). Its pathway is amino-acid biosynthesis; L-proline biosynthesis; L-glutamate 5-semialdehyde from L-glutamate: step 2/2. Its function is as follows. Catalyzes the NADPH-dependent reduction of L-glutamate 5-phosphate into L-glutamate 5-semialdehyde and phosphate. The product spontaneously undergoes cyclization to form 1-pyrroline-5-carboxylate. The chain is Gamma-glutamyl phosphate reductase from Prochlorococcus marinus (strain NATL1A).